A 98-amino-acid polypeptide reads, in one-letter code: NADH-ubiquinone oxidoreductase chain 4L (98 aa).

The next 3 membrane-spanning stretches (helical) occupy residues 1 to 21 (MPII…GMLT), 29 to 49 (SLLC…LMAL), and 58 to 78 (IVPI…LSLL).

This sequence belongs to the complex I subunit 4L family. In terms of assembly, core subunit of respiratory chain NADH dehydrogenase (Complex I) which is composed of 45 different subunits.

It localises to the mitochondrion inner membrane. It carries out the reaction a ubiquinone + NADH + 5 H(+)(in) = a ubiquinol + NAD(+) + 4 H(+)(out). Functionally, core subunit of the mitochondrial membrane respiratory chain NADH dehydrogenase (Complex I) which catalyzes electron transfer from NADH through the respiratory chain, using ubiquinone as an electron acceptor. Part of the enzyme membrane arm which is embedded in the lipid bilayer and involved in proton translocation. The sequence is that of NADH-ubiquinone oxidoreductase chain 4L (MT-ND4L) from Presbytis melalophos (Mitred leaf monkey).